A 128-amino-acid chain; its full sequence is Glycine cleavage system H protein (128 aa).

The Lipoyl-binding domain occupies 23–105 (IGIVGITWFA…YGEGWILKLE (83 aa)). Position 64 is an N6-lipoyllysine (K64).

Belongs to the GcvH family. In terms of assembly, the glycine cleavage system is composed of four proteins: P, T, L and H. Requires (R)-lipoate as cofactor.

Functionally, the glycine cleavage system catalyzes the degradation of glycine. The H protein shuttles the methylamine group of glycine from the P protein to the T protein. The chain is Glycine cleavage system H protein from Symbiobacterium thermophilum (strain DSM 24528 / JCM 14929 / IAM 14863 / T).